The primary structure comprises 200 residues: Recombination protein RecR (200 aa).

A C4-type zinc finger spans residues 57-72 (CRLCRTLTEEELCPQC). One can recognise a Toprim domain in the interval 80-175 (TLLCVVEGPT…VASRIAHGVP (96 aa)).

This sequence belongs to the RecR family.

Functionally, may play a role in DNA repair. It seems to be involved in an RecBC-independent recombinational process of DNA repair. It may act with RecF and RecO. In Pseudomonas syringae pv. tomato (strain ATCC BAA-871 / DC3000), this protein is Recombination protein RecR.